The chain runs to 97 residues: MLKMTLNNLQLFAHKKGGGSTSNGRDSQAKRLGAKAADGQTVTGGSILYRQRGTHIYPGVNVGRGGDDTLFAKVEGVVRFERKGRDKKQVSVYPIAK.

The propeptide occupies 1–12 (MLKMTLNNLQLF). A disordered region spans residues 13 to 37 (AHKKGGGSTSNGRDSQAKRLGAKAA).

This sequence belongs to the bacterial ribosomal protein bL27 family. In terms of processing, the N-terminus is cleaved by ribosomal processing cysteine protease Prp.

The sequence is that of Large ribosomal subunit protein bL27 from Streptococcus pneumoniae serotype 2 (strain D39 / NCTC 7466).